A 353-amino-acid polypeptide reads, in one-letter code: Photosystem II D2 protein (353 aa).

Threonine 2 carries the post-translational modification N-acetylthreonine. Position 2 is a phosphothreonine (threonine 2). Residues 41 to 61 traverse the membrane as a helical segment; that stretch reads CAYFALGGWFTGTTFVTSWYT. Position 118 (histidine 118) interacts with chlorophyll a. A helical membrane pass occupies residues 125–141; sequence GFMLRQFELARSVQLRP. Positions 130 and 143 each coordinate pheophytin a. A helical membrane pass occupies residues 153 to 166; it reads VFVSVFLIYPLGQS. Histidine 198 serves as a coordination point for chlorophyll a. Residues 208 to 228 traverse the membrane as a helical segment; that stretch reads AALLCAIHGATVENLYFEDGD. Residues histidine 215 and phenylalanine 262 each coordinate a plastoquinone. Position 215 (histidine 215) interacts with Fe cation. Residue histidine 269 coordinates Fe cation. Residues 279–295 form a helical membrane-spanning segment; the sequence is GLWMSALGVVGLALNLR.

This sequence belongs to the reaction center PufL/M/PsbA/D family. In terms of assembly, PSII is composed of 1 copy each of membrane proteins PsbA, PsbB, PsbC, PsbD, PsbE, PsbF, PsbH, PsbI, PsbJ, PsbK, PsbL, PsbM, PsbT, PsbX, PsbY, PsbZ, Psb30/Ycf12, at least 3 peripheral proteins of the oxygen-evolving complex and a large number of cofactors. It forms dimeric complexes. The D1/D2 heterodimer binds P680, chlorophylls that are the primary electron donor of PSII, and subsequent electron acceptors. It shares a non-heme iron and each subunit binds pheophytin, quinone, additional chlorophylls, carotenoids and lipids. There is also a Cl(-1) ion associated with D1 and D2, which is required for oxygen evolution. The PSII complex binds additional chlorophylls, carotenoids and specific lipids. is required as a cofactor.

It is found in the plastid. The protein localises to the chloroplast thylakoid membrane. It catalyses the reaction 2 a plastoquinone + 4 hnu + 2 H2O = 2 a plastoquinol + O2. Photosystem II (PSII) is a light-driven water:plastoquinone oxidoreductase that uses light energy to abstract electrons from H(2)O, generating O(2) and a proton gradient subsequently used for ATP formation. It consists of a core antenna complex that captures photons, and an electron transfer chain that converts photonic excitation into a charge separation. The D1/D2 (PsbA/PsbD) reaction center heterodimer binds P680, the primary electron donor of PSII as well as several subsequent electron acceptors. D2 is needed for assembly of a stable PSII complex. The polypeptide is Photosystem II D2 protein (Panax ginseng (Korean ginseng)).